The primary structure comprises 60 residues: Large ribosomal subunit protein uL30 (60 aa).

The protein belongs to the universal ribosomal protein uL30 family. As to quaternary structure, part of the 50S ribosomal subunit.

In Syntrophomonas wolfei subsp. wolfei (strain DSM 2245B / Goettingen), this protein is Large ribosomal subunit protein uL30.